Consider the following 210-residue polypeptide: Proteasome subunit beta (210 aa).

A propeptide spans 1–9 (MDNDKHLKG) (removed in mature form; by autocatalysis). Threonine 10 acts as the Nucleophile in catalysis.

It belongs to the peptidase T1B family. As to quaternary structure, the 20S proteasome core is composed of 14 alpha and 14 beta subunits that assemble into four stacked heptameric rings, resulting in a barrel-shaped structure. The two inner rings, each composed of seven catalytic beta subunits, are sandwiched by two outer rings, each composed of seven alpha subunits. The catalytic chamber with the active sites is on the inside of the barrel. Has a gated structure, the ends of the cylinder being occluded by the N-termini of the alpha-subunits. Is capped at one or both ends by the proteasome regulatory ATPase, PAN.

It localises to the cytoplasm. The catalysed reaction is Cleavage of peptide bonds with very broad specificity.. With respect to regulation, the formation of the proteasomal ATPase PAN-20S proteasome complex, via the docking of the C-termini of PAN into the intersubunit pockets in the alpha-rings, triggers opening of the gate for substrate entry. Interconversion between the open-gate and close-gate conformations leads to a dynamic regulation of the 20S proteasome proteolysis activity. In terms of biological role, component of the proteasome core, a large protease complex with broad specificity involved in protein degradation. This Methanohalophilus mahii (strain ATCC 35705 / DSM 5219 / SLP) protein is Proteasome subunit beta.